Consider the following 556-residue polypeptide: Phenylalanine--tRNA ligase beta subunit (556 aa).

Residues 269–345 (MEPEEVVYDV…MGYGYERIEP (77 aa)) form the B5 domain. Residues Asp-323, Asp-329, Glu-332, and Glu-333 each coordinate Mg(2+).

The protein belongs to the phenylalanyl-tRNA synthetase beta subunit family. Type 2 subfamily. In terms of assembly, tetramer of two alpha and two beta subunits. Mg(2+) serves as cofactor.

It is found in the cytoplasm. It carries out the reaction tRNA(Phe) + L-phenylalanine + ATP = L-phenylalanyl-tRNA(Phe) + AMP + diphosphate + H(+). The polypeptide is Phenylalanine--tRNA ligase beta subunit (Thermofilum pendens (strain DSM 2475 / Hrk 5)).